The following is a 530-amino-acid chain: MNQRRSANPSGKYLMALDAGTGSVRAVIFDLEGNQIAAGQAEWIHQPVPDVPGSMEFDLATNWQLVCQCIRQALKTAQLPASAIQGVASCSMREGIVLYNRNGEPIWACANVDARSSQEVSELKALYDSTFEYDVYRCSGQTLALGAMPRLLWLAHHRPDIYHQATALTMISDWLANMLSGELAVDPSNAGTTGMLDLVSRDWRPDLLEMAGLRSDILSPVKETGTLLGYVTEKAAVQCGLNIGTPVIMGGGDVQLGCLGLGVVKPAQTAVIGGTFWQQVVNLPEPVTDPNMNTRINPHVIPGMVQAESISFFTGLTMRWFRDAFCAEEKLLAERLGVDTYSLLEDMAARVPAGAYGVIPIFSDVMRFKAWYHAAPSFINLSIDPEKCNKATLFRALEENAAIVSACNLDLISAFSAVKPDSLVFAGGGSKGKLWSQILSDVTGLPVRVPMVKESTALGCAIAAGVGVGLYDAMGATGEKLVRWQHEYQPNPEHCEVYQKAKQDWQAIYADQLTLVDHGLTTSLWKAPGL.

The protein belongs to the FGGY kinase family.

The protein localises to the cytoplasm. It catalyses the reaction (S)-4,5-dihydroxypentane-2,3-dione + ATP = (2S)-2-hydroxy-3,4-dioxopentyl phosphate + ADP + H(+). Catalyzes the phosphorylation of autoinducer-2 (AI-2) to phospho-AI-2, which subsequently inactivates the transcriptional regulator LsrR and leads to the transcription of the lsr operon. Phosphorylates the ring-open form of (S)-4,5-dihydroxypentane-2,3-dione (DPD), which is the precursor to all AI-2 signaling molecules, at the C5 position. The sequence is that of Autoinducer-2 kinase from Photorhabdus laumondii subsp. laumondii (strain DSM 15139 / CIP 105565 / TT01) (Photorhabdus luminescens subsp. laumondii).